The sequence spans 224 residues: Protein-L-isoaspartate O-methyltransferase (224 aa).

Serine 70 is an active-site residue.

This sequence belongs to the methyltransferase superfamily. L-isoaspartyl/D-aspartyl protein methyltransferase family.

The protein localises to the cytoplasm. The catalysed reaction is [protein]-L-isoaspartate + S-adenosyl-L-methionine = [protein]-L-isoaspartate alpha-methyl ester + S-adenosyl-L-homocysteine. In terms of biological role, catalyzes the methyl esterification of L-isoaspartyl residues in peptides and proteins that result from spontaneous decomposition of normal L-aspartyl and L-asparaginyl residues. It plays a role in the repair and/or degradation of damaged proteins. This chain is Protein-L-isoaspartate O-methyltransferase, found in Cellvibrio japonicus (strain Ueda107) (Pseudomonas fluorescens subsp. cellulosa).